Here is a 465-residue protein sequence, read N- to C-terminus: Phosphatidate cytidylyltransferase (465 aa).

Residues 1–60 (MSDQPPAENADVRQRRAPESPVTERLRAPARDDARPTSDESDMEGILQDEDSDAGSKNKE) form a disordered region. Positions 10 to 38 (ADVRQRRAPESPVTERLRAPARDDARPTS) are enriched in basic and acidic residues. The span at 39–53 (DESDMEGILQDEDSD) shows a compositional bias: acidic residues. The next 8 membrane-spanning stretches (helical) occupy residues 95–117 (WVVRGLFSIIMISTFTFIVTRGA), 121–143 (MFLVFLIQFKCFQEIISIGLAVY), 158–178 (FLLTSNYFFFGESLIDYWGIV), 187–207 (FLVAYHRLVSFALYCIGFVSF), 214–234 (GYYMRQFSLFAWTHLTLLLIV), 239–259 (FIIQNIFQGLIWFLAPVAMII), 288–308 (GFIGGAFSTVVFGILLSLALY), and 367–387 (IALSLFASILGPFGGFFASGF).

The protein belongs to the CDS family.

The protein resides in the membrane. The enzyme catalyses a 1,2-diacyl-sn-glycero-3-phosphate + CTP + H(+) = a CDP-1,2-diacyl-sn-glycerol + diphosphate. Its pathway is phospholipid metabolism; CDP-diacylglycerol biosynthesis; CDP-diacylglycerol from sn-glycerol 3-phosphate: step 3/3. Its function is as follows. Provides CDP-diacylglycerol, an important precursor for the synthesis of phosphatidylinositol (PtdIns). This is Phosphatidate cytidylyltransferase (cdgs-1) from Caenorhabditis elegans.